The following is a 185-amino-acid chain: Signal peptidase I (185 aa).

Over 1–20 the chain is Cytoplasmic; it reads MKSEKEKTSKKSAVLDWAKA. Residues 21-41 traverse the membrane as a helical segment; that stretch reads IIIAVVLAVLIRNFLFAPYVV. Residues 42–185 lie on the Extracellular side of the membrane; that stretch reads DGESMEPTLH…FPFNEIRKTK (144 aa). Residues Ser-45 and Lys-85 contribute to the active site.

The protein belongs to the peptidase S26 family.

Its subcellular location is the cell membrane. It catalyses the reaction Cleavage of hydrophobic, N-terminal signal or leader sequences from secreted and periplasmic proteins.. The protein is Signal peptidase I (sipA) of Bacillus amyloliquefaciens (Bacillus velezensis).